A 639-amino-acid polypeptide reads, in one-letter code: Coiled-coil domain-containing protein 27 (639 aa).

The tract at residues 154–176 is disordered; that stretch reads YPRKRSEPSDPSPTGSPTVVKKS. Residues 203-242 adopt a coiled-coil conformation; sequence QRFSEMESQMQKKDQEILTLQKEKEALKKQLKNLLRGKGT. A disordered region spans residues 291–385; it reads ESSKELHVEP…EECHPKRSYS (95 aa). The segment covering 292-309 has biased composition (basic and acidic residues); sequence SSKELHVEPGSAIEEKSS. Residues 310-320 show a composition bias toward low complexity; it reads EGPPEEAAAAK. 2 stretches are compositionally biased toward acidic residues: residues 336–350 and 358–369; these read GPEE…EVEG and EGEILVNEEEAS. The span at 370-380 shows a compositional bias: basic and acidic residues; it reads WELREDEECHP.

In Mus musculus (Mouse), this protein is Coiled-coil domain-containing protein 27 (Ccdc27).